Reading from the N-terminus, the 233-residue chain is Peptidyl-tRNA hydrolase (233 aa).

TRNA is bound at residue Tyr-14. His-19 functions as the Proton acceptor in the catalytic mechanism. TRNA-binding residues include Phe-64, Asn-66, and Asn-112. The disordered stretch occupies residues 187-233; the sequence is VSPRRSGTGQKGKDKPPAPAKQQATATKAEPEPDTRSALQKLMERFK.

Belongs to the PTH family. Monomer.

The protein resides in the cytoplasm. It catalyses the reaction an N-acyl-L-alpha-aminoacyl-tRNA + H2O = an N-acyl-L-amino acid + a tRNA + H(+). In terms of biological role, hydrolyzes ribosome-free peptidyl-tRNAs (with 1 or more amino acids incorporated), which drop off the ribosome during protein synthesis, or as a result of ribosome stalling. Functionally, catalyzes the release of premature peptidyl moieties from peptidyl-tRNA molecules trapped in stalled 50S ribosomal subunits, and thus maintains levels of free tRNAs and 50S ribosomes. The chain is Peptidyl-tRNA hydrolase from Roseobacter denitrificans (strain ATCC 33942 / OCh 114) (Erythrobacter sp. (strain OCh 114)).